Reading from the N-terminus, the 959-residue chain is Autophagy-related protein 18g (959 aa).

2 WD repeats span residues 376 to 416 (AHTS…SHNA) and 438 to 479 (ITSA…AAFQ). The interval 802–832 (GSIESAESSEEGSTKQMENLHDSDHMSNSIK) is disordered.

This sequence belongs to the WD repeat PROPPIN family. In terms of assembly, component of the PI(3,5)P2 regulatory complex at least composed of ATG18, SAC/FIG4, FAB1 and VAC14. Expressed in leaves.

The protein localises to the preautophagosomal structure membrane. Its subcellular location is the vacuole membrane. The PI(3,5)P2 regulatory complex regulates both the synthesis and turnover of phosphatidylinositol 3,5-bisphosphate (PtdIns(3,5)P2). Required for autophagy. This Arabidopsis thaliana (Mouse-ear cress) protein is Autophagy-related protein 18g (ATG18G).